Here is a 554-residue protein sequence, read N- to C-terminus: Bifunctional epoxide hydrolase 2 (554 aa).

Positions 1 to 224 (MALRVAAFDL…KVTGTQFPEA (224 aa)) are phosphatase. 2 residues coordinate Mg(2+): Asp-9 and Asp-11. Lys-55 bears the N6-succinyllysine mark. 123–124 (TN) is a binding site for phosphate. An N6-acetyllysine; alternate modification is found at Lys-176. Lys-176 carries the N6-succinyllysine; alternate modification. Position 185 (Asp-185) interacts with Mg(2+). An N6-acetyllysine mark is found at Lys-191 and Lys-215. The epoxide hydrolase stretch occupies residues 233 to 554 (NDVSHGYVTV…VQNPSVTSKI (322 aa)). The AB hydrolase-1 domain occupies 257–530 (PALCLCHGFP…CGHWTQIEKP (274 aa)). The active-site Nucleophile is Asp-333. Ser-368 is subject to Phosphoserine. Lys-371 carries the post-translational modification N6-succinyllysine. Tyr-381 provides a ligand contact to substrate. Residues Lys-420 and Lys-454 each carry the N6-succinyllysine modification. Catalysis depends on Tyr-465, which acts as the Proton donor. Lys-504 bears the N6-succinyllysine mark. Lys-508 carries the post-translational modification N6-acetyllysine; alternate. Lys-508 carries the post-translational modification N6-succinyllysine; alternate. A lipid anchor (S-(15-deoxy-Delta12,14-prostaglandin J2-9-yl)cysteine) is attached at Cys-521. Catalysis depends on His-523, which acts as the Proton acceptor. A Microbody targeting signal motif is present at residues 552–554 (SKI). Lys-553 is modified (N6-succinyllysine).

The protein belongs to the AB hydrolase superfamily. Epoxide hydrolase family. As to quaternary structure, homodimer. Mg(2+) is required as a cofactor. Post-translationally, the N-terminus is blocked. In terms of processing, the covalent modification of cysteine by 15-deoxy-Delta12,14-prostaglandin-J2 is autocatalytic and reversible. It may occur as an alternative to other cysteine modifications, such as S-nitrosylation and S-palmitoylation. As to expression, detected in liver, intestine, ovary and kidney. Detected at low levels in heart and muscle.

It localises to the cytoplasm. The protein resides in the peroxisome. It carries out the reaction an epoxide + H2O = an ethanediol. It catalyses the reaction (9S,10S)-10-hydroxy-9-(phosphooxy)octadecanoate + H2O = (9S,10S)-9,10-dihydroxyoctadecanoate + phosphate. The catalysed reaction is 8-hydroxy-(11S,12S)-epoxy-(5Z,9E,14Z)-eicosatrienoate + H2O = (8,11R,12S)-trihydroxy-(5Z,9E,14Z)-eicosatrienoate. The enzyme catalyses 10-hydroxy-(11S,12S)-epoxy- (5Z,8Z,14Z)-eicosatrienoate + H2O = (10,11S,12R)-trihydroxy-(5Z,8Z,14Z)-eicosatrienoate. It carries out the reaction (8S,9R)-epoxy-(5Z,11Z,14Z)-eicosatrienoate + H2O = (8S,9S)-dihydroxy-(5Z,11Z,14Z)-eicosatrienoate. It catalyses the reaction (11S,12R)-epoxy-(5Z,8Z,14Z)-eicosatrienoate + H2O = (11R,12R)-dihydroxy-(5Z,8Z,14Z)-eicosatrienoate. The catalysed reaction is (11S,12R)-epoxy-(5Z,8Z,14Z)-eicosatrienoate + H2O = (11S,12S)-dihydroxy-(5Z,8Z,14Z)-eicosatrienoate. The enzyme catalyses (14S,15R)-epoxy-(5Z,8Z,11Z)-eicosatrienoate + H2O = (14R,15R)-dihydroxy-(5Z,8Z,11Z)-eicosatrienoate. It carries out the reaction (14S,15R)-epoxy-(5Z,8Z,11Z)-eicosatrienoate + H2O = (14S,15S)-dihydroxy-(5Z,8Z,11Z)-eicosatrienoate. It catalyses the reaction (11R,12S)-epoxy-(5Z,8Z,14Z)-eicosatrienoate + H2O = (11S,12S)-dihydroxy-(5Z,8Z,14Z)-eicosatrienoate. The catalysed reaction is (11R,12S)-epoxy-(5Z,8Z,14Z)-eicosatrienoate + H2O = (11R,12R)-dihydroxy-(5Z,8Z,14Z)-eicosatrienoate. The enzyme catalyses (8S,9R)-epoxy-(5Z,11Z,14Z)-eicosatrienoate + H2O = (8R,9R)-dihydroxy-(5Z,11Z,14Z)-eicosatrienoate. It carries out the reaction 12-phosphooxy-(9Z)-octadecenoate + H2O = 12-hydroxy-(9Z)-octadecenoate + phosphate. It catalyses the reaction 12-phosphooxy-(9E)-octadecenoate + H2O = 12-hydroxy-(9E)-octadecenoate + phosphate. The catalysed reaction is 12-(phosphooxy)octadecanoate + H2O = 12-hydroxyoctadecanoate + phosphate. The enzyme catalyses 8,9-epoxy-(5Z,11Z,14Z)-eicosatrienoate + H2O = 8,9-dihydroxy-(5Z,11Z,14Z)-eicosatrienoate. It carries out the reaction 11,12-epoxy-(5Z,8Z,14Z)-eicosatrienoate + H2O = 11,12-dihydroxy-(5Z,8Z,14Z)-eicosatrienoate. It catalyses the reaction 14,15-epoxy-(5Z,8Z,11Z)-eicosatrienoate + H2O = 14,15-dihydroxy-(5Z,8Z,11Z)-eicosatrienoate. The catalysed reaction is 9,10-epoxy-(12Z)-octadecenoate + H2O = 9,10-dihydroxy-(12Z)-octadecenoate. The enzyme catalyses 1-tetradecanoyl-sn-glycerol 3-phosphate + H2O = 1-tetradecanoyl-sn-glycerol + phosphate. It carries out the reaction 1-octadecanoyl-sn-glycero-3-phosphate + H2O = 1-octadecanoyl-sn-glycerol + phosphate. It catalyses the reaction 1-(5Z,8Z,11Z,14Z-eicosatetraenoyl)-sn-glycero-3-phosphate + H2O = 1-(5Z,8Z,11Z,14Z-eicosatetraenoyl)-sn-glycerol + phosphate. The catalysed reaction is 1-hexadecanoyl-sn-glycero-3-phosphate + H2O = 1-hexadecanoyl-sn-glycerol + phosphate. The enzyme catalyses 1-(9Z-octadecenoyl)-sn-glycero-3-phosphate + H2O = 1-(9Z-octadecenoyl)-sn-glycerol + phosphate. It carries out the reaction (14R,15S)-epoxy-(5Z,8Z,11Z)-eicosatrienoate + H2O = (14R,15R)-dihydroxy-(5Z,8Z,11Z)-eicosatrienoate. Its activity is regulated as follows. Inhibited by 1-(1-acetylpiperidin-4-yl)-3-(4-(trifl uoromethoxy)phenyl)urea (TPAU), 1-cyclohexyl-3-dodecylurea (CDU), 12-(3-adamantan-1-yl-ureido)-dodecanoic acid (AUDA), 1-((3S, 5S, 7S)-adamantan-1-yl)-3-(5-(2-(2-ethoxyethoxy) ethoxy)pentyl)urea (AEPU), N-adamantyl-N[']-cyclohexyl urea (ACU), 4-(((1S, 4S)-4-(3-((3S, 5S, 7S)-adamantan-1-yl) ureido)cyclohexyl)oxy)benzoic acid (c-AUCB), 4-(((1R, 4R)-4-(3-((3S, 5S, 7S)-adamantan-1-yl)ureido)cyclohexyl)oxy)benzoic acid (t-AUCB), 4-(((1R, 4R)-4-(3-(4(trifluoromethoxy)phenyl)ureido)cyclohexyl)oxy)benzoic acid (t-TAUCB) and to a lesser extent by 8-(3-((3S, 5S, 7S)-adamantan-1-yl)ureido) octanoic acid (AUOA). Phosphatase activity is inhibited by dodecyl-phosphate, phospholipids such as phospho-lysophosphatidic acids and fatty acids such as palmitic acid and lauric acid. Functionally, bifunctional enzyme. The C-terminal domain has epoxide hydrolase activity and acts on epoxides (alkene oxides, oxiranes) and arene oxides. Plays a role in xenobiotic metabolism by degrading potentially toxic epoxides. Also determines steady-state levels of physiological mediators. In terms of biological role, bifunctional enzyme. The N-terminal domain has lipid phosphatase activity, with the highest activity towards threo-9,10-phosphonooxy-hydroxy-octadecanoic acid, followed by erythro-9,10-phosphonooxy-hydroxy-octadecanoic acid, 12-phosphonooxy-octadec-9Z-enoic acid and 12-phosphonooxy-octadec-9E-enoic acid. Has phosphatase activity toward lyso-glycerophospholipids with also some lower activity toward lysolipids of sphingolipid and isoprenoid phosphates. This chain is Bifunctional epoxide hydrolase 2, found in Mus musculus (Mouse).